Reading from the N-terminus, the 464-residue chain is Argininosuccinate lyase (464 aa).

Belongs to the lyase 1 family. Argininosuccinate lyase subfamily.

It is found in the cytoplasm. The enzyme catalyses 2-(N(omega)-L-arginino)succinate = fumarate + L-arginine. The protein operates within amino-acid biosynthesis; L-arginine biosynthesis; L-arginine from L-ornithine and carbamoyl phosphate: step 3/3. This chain is Argininosuccinate lyase, found in Moorella thermoacetica (strain ATCC 39073 / JCM 9320).